Consider the following 304-residue polypeptide: Protein PagO (304 aa).

The next 10 membrane-spanning stretches (helical) occupy residues 4–24, 34–54, 67–87, 95–115, 119–139, 150–170, 180–200, 214–234, 246–266, and 267–287; these read VSIS…WLAM, VFAT…IAWL, LFQF…MIYG, LAAI…VLFL, AKLM…GILL, WQGI…YTQC, ITFN…TGWF, ILAT…CYFA, LVFL…YGYA, and ISTH…LTLV. 2 consecutive EamA domains span residues 15 to 139 and 161 to 287; these read LTWG…GILL and LIHA…LTLV.

Belongs to the EamA transporter family.

Its subcellular location is the cell membrane. In Salmonella typhimurium (strain LT2 / SGSC1412 / ATCC 700720), this protein is Protein PagO (pagO).